We begin with the raw amino-acid sequence, 209 residues long: Protein ASG7 (209 aa).

The Lumenal portion of the chain corresponds to 1–49 (MTTLASSIEHKTKHLAAPFENDENTWMKKYCCQCKSCKMSVPVQPWLPR). Residues 50 to 70 (FFVFGILCPVFWLVNLLAWWF) form a helical membrane-spanning segment. Topologically, residues 71-184 (LQYWQPHELE…LLRKTFRNWN (114 aa)) are cytoplasmic. Phosphoserine occurs at positions 121, 123, and 125. At Thr153 the chain carries Phosphothreonine. A helical transmembrane segment spans residues 185-205 (LRSLLGLLIDSILIIFVVLLC). Residues 206-209 (KKSR) lie on the Lumenal side of the membrane.

It localises to the endomembrane system. Its function is as follows. Required for receptor inhibition of inappropriately expressed a-factor receptor (STE3) in MAT a cells. Inhibits signaling by relocalizing the G protein beta-gamma (STE4-STE18) subunit to intracellular membranes. May also be a mechanism for the down-regulation of the mating pheromone response after the zygotic fusion event, promoting the transition of the new diploid cell to vegetative growth. The polypeptide is Protein ASG7 (ASG7) (Saccharomyces cerevisiae (strain YJM789) (Baker's yeast)).